The chain runs to 67 residues: Large ribosomal subunit protein bL28 (67 aa).

It belongs to the bacterial ribosomal protein bL28 family.

This Nitratiruptor sp. (strain SB155-2) protein is Large ribosomal subunit protein bL28.